We begin with the raw amino-acid sequence, 720 residues long: Mitogen-activated protein kinase 6 (720 aa).

Methionine 1 participates in a covalent cross-link: Peptide (Met-Gly) (interchain with G-Cter in ubiquitin). The region spanning 20-316 is the Protein kinase domain; sequence YMDLKPLGCG…AEEALSHPYM (297 aa). ATP is bound by residues 26–34 and lysine 49; that span reads LGCGGNGLV. Residue aspartate 152 is the Proton acceptor of the active site. At serine 189 the chain carries Phosphoserine; by PAK1, PAK2 and PAK3. Residues 189 to 191 carry the SEG motif motif; it reads SEG. The FRIEDE motif motif lies at 332 to 337; the sequence is FHIEDE. Phosphoserine is present on residues serine 386, serine 452, serine 554, and serine 556. Residues 638–657 form a disordered region; the sequence is SEMLETEPVEEGKRGERGRE. A compositionally biased stretch (basic and acidic residues) spans 647-657; sequence EEGKRGERGRE. Serine 683 bears the Phosphoserine mark. Over residues 698-714 the composition is skewed to polar residues; that stretch reads PSAMKSSPQIPHKTYSN. The interval 698 to 720 is disordered; that stretch reads PSAMKSSPQIPHKTYSNILKHLN.

It belongs to the protein kinase superfamily. CMGC Ser/Thr protein kinase family. MAP kinase subfamily. In terms of assembly, heterodimer with ERK4/MAPK4. Interacts with (via FRIEDE motif) MAPKAPK5. Interacts with UBE3A; this interaction may be indirect and mediated by HERC2, possibly via HERC2 interaction with NEURL4. Requires Mg(2+) as cofactor. Post-translationally, phosphorylated at Ser-189 by PAK1, PAK2 and PAK3 resulting in catalytic activation. Phosphorylated by MAPKAPK5 at other sites. In terms of processing, ubiquitination at Met-1 leads to degradation by the proteasome pathway. In terms of tissue distribution, highest levels within the nervous system, expressed in different tissues, mostly in skeletal muscle.

The protein resides in the cytoplasm. It is found in the nucleus. It carries out the reaction L-seryl-[protein] + ATP = O-phospho-L-seryl-[protein] + ADP + H(+). The enzyme catalyses L-threonyl-[protein] + ATP = O-phospho-L-threonyl-[protein] + ADP + H(+). Its activity is regulated as follows. Activated by phosphorylation at Ser-189. Its function is as follows. Atypical MAPK protein. Phosphorylates microtubule-associated protein 2 (MAP2) and MAPKAPK5. The precise role of the complex formed with MAPKAPK5 is still unclear, but the complex follows a complex set of phosphorylation events: upon interaction with atypical MAPKAPK5, ERK3/MAPK6 is phosphorylated at Ser-189 and then mediates phosphorylation and activation of MAPKAPK5, which in turn phosphorylates ERK3/MAPK6. May promote entry in the cell cycle. This is Mitogen-activated protein kinase 6 (Mapk6) from Rattus norvegicus (Rat).